Consider the following 239-residue polypeptide: Aspartate/glutamate leucyltransferase (239 aa).

Belongs to the R-transferase family. Bpt subfamily.

It localises to the cytoplasm. The catalysed reaction is N-terminal L-glutamyl-[protein] + L-leucyl-tRNA(Leu) = N-terminal L-leucyl-L-glutamyl-[protein] + tRNA(Leu) + H(+). It carries out the reaction N-terminal L-aspartyl-[protein] + L-leucyl-tRNA(Leu) = N-terminal L-leucyl-L-aspartyl-[protein] + tRNA(Leu) + H(+). In terms of biological role, functions in the N-end rule pathway of protein degradation where it conjugates Leu from its aminoacyl-tRNA to the N-termini of proteins containing an N-terminal aspartate or glutamate. In Campylobacter jejuni subsp. jejuni serotype O:23/36 (strain 81-176), this protein is Aspartate/glutamate leucyltransferase.